A 128-amino-acid polypeptide reads, in one-letter code: Large ribosomal subunit protein bL19 (128 aa).

This sequence belongs to the bacterial ribosomal protein bL19 family.

Functionally, this protein is located at the 30S-50S ribosomal subunit interface and may play a role in the structure and function of the aminoacyl-tRNA binding site. The protein is Large ribosomal subunit protein bL19 of Caldicellulosiruptor bescii (strain ATCC BAA-1888 / DSM 6725 / KCTC 15123 / Z-1320) (Anaerocellum thermophilum).